Consider the following 101-residue polypeptide: NAD(P)H-quinone oxidoreductase subunit 4L, chloroplastic (101 aa).

3 consecutive transmembrane segments (helical) span residues 2–22 (MLEH…YGLI), 32–52 (MCLE…SDFF), and 61–81 (IFSI…PAIV).

It belongs to the complex I subunit 4L family. NDH is composed of at least 16 different subunits, 5 of which are encoded in the nucleus.

Its subcellular location is the plastid. It localises to the chloroplast thylakoid membrane. The enzyme catalyses a plastoquinone + NADH + (n+1) H(+)(in) = a plastoquinol + NAD(+) + n H(+)(out). It catalyses the reaction a plastoquinone + NADPH + (n+1) H(+)(in) = a plastoquinol + NADP(+) + n H(+)(out). NDH shuttles electrons from NAD(P)H:plastoquinone, via FMN and iron-sulfur (Fe-S) centers, to quinones in the photosynthetic chain and possibly in a chloroplast respiratory chain. The immediate electron acceptor for the enzyme in this species is believed to be plastoquinone. Couples the redox reaction to proton translocation, and thus conserves the redox energy in a proton gradient. The sequence is that of NAD(P)H-quinone oxidoreductase subunit 4L, chloroplastic from Vitis vinifera (Grape).